We begin with the raw amino-acid sequence, 281 residues long: MSTTWFVGADWLAEHIDDPEIQIIDARMASPGQEDRNVAQEYLNGHIPGAVFFDIEALSDHTSPLPHMLPRPETFAVAMRELGVNQDKHLIVYDEGNLFSAPRAWWMLRTFGVEKVSILGGGLAGWQRDDLLLEEGAVELPEGEFNAAFNPEAVVKVTDVLLASHENTAQIIDARPAARFNAEVDEPRPGLRRGHIPGALNVPWTELVREGELKTTDELDAIFFGRGVSYDKPIIVSCGSGVTAAVVLLALATLDVPNVKLYDGAWSEWGARADLPVEPVK.

Rhodanese domains are found at residues 17 to 135 (DDPE…LLEE) and 165 to 278 (HENT…LPVE). Arginine 179 contributes to the substrate binding site. Cysteine 238 serves as the catalytic Cysteine persulfide intermediate. The substrate specificity stretch occupies residues 238–244 (CGSGVTA).

In terms of assembly, monomer.

The protein resides in the cytoplasm. The enzyme catalyses 2-oxo-3-sulfanylpropanoate + [thioredoxin]-dithiol = [thioredoxin]-disulfide + hydrogen sulfide + pyruvate + H(+). Functionally, catalyzes the transfer of sulfur from 3-mercaptopyruvate to a thiol-containing acceptor to form an intramolecular disulfide releasing hydrogen sulfide and pyruvate. May be involved in the enhancement of bacterial growth inhibition by serine. This chain is 3-mercaptopyruvate sulfurtransferase (sseA), found in Escherichia coli (strain K12).